Consider the following 193-residue polypeptide: Mediator of RNA polymerase II transcription subunit 11 (193 aa).

Residues 31–68 (AREIMQDLGKEKQISKNKMDDNANSFKKLITQVENELS) are a coiled coil. The tract at residues 115–193 (IEPPTQEVDE…EEEEGEQMEN (79 aa)) is disordered. The segment covering 121–143 (EVDEDNEDEEDSGDADMLEETPE) has biased composition (acidic residues). Over residues 150 to 175 (TTSSSATTSDGGSGGADDAASSSAPR) the composition is skewed to low complexity. A compositionally biased stretch (acidic residues) spans 184–193 (EEEEGEQMEN).

This sequence belongs to the Mediator complex subunit 11 family. As to quaternary structure, component of the Mediator complex.

It is found in the nucleus. Functionally, component of the Mediator complex, a coactivator involved in the regulated transcription of nearly all RNA polymerase II-dependent genes. Mediator functions as a bridge to convey information from gene-specific regulatory proteins to the basal RNA polymerase II transcription machinery. Mediator is recruited to promoters by direct interactions with regulatory proteins and serves as a scaffold for the assembly of a functional pre-initiation complex with RNA polymerase II and the general transcription factors. This Caenorhabditis briggsae protein is Mediator of RNA polymerase II transcription subunit 11 (mdt-11).